A 372-amino-acid polypeptide reads, in one-letter code: Cuticle collagen dpy-10 (372 aa).

Residues 1-45 (MKNNAKEDYRTFSLTTNYSRQMIYRCVTGLQIGFSLFSFIIVCVA) form the signal peptide. 3 triple-helical region regions span residues 144-173 (GPPG…PGTT), 195-251 (GPPG…KGPT), and 259-324 (GPPG…PGVC). Positions 144-372 (GPPGPRGSSG…RAGYQGYGRK (229 aa)) are disordered. The segment covering 185-196 (EPPPCRPCPKGP) has biased composition (pro residues). Over residues 197 to 208 (PGIKGWPGFPGD) the composition is skewed to low complexity. Gly residues-rich tracts occupy residues 237 to 246 (GYRGGPGAPG) and 283 to 292 (GLTGGQGERG). Low complexity predominate over residues 293-303 (WPGVSGESGEP). Over residues 353–363 (GYGGSRGGGDR) the composition is skewed to gly residues.

It belongs to the cuticular collagen family. In terms of assembly, collagen polypeptide chains are complexed within the cuticle by disulfide bonds and other types of covalent cross-links.

Functionally, nematode cuticles are composed largely of collagen-like proteins. The cuticle functions both as an exoskeleton and as a barrier to protect the worm from its environment. The sequence is that of Cuticle collagen dpy-10 (dpy-10) from Caenorhabditis elegans.